The primary structure comprises 380 residues: Coiled-coil domain-containing protein 74B (380 aa).

3 disordered regions span residues 1–51 (MSGA…KRNL), 89–108 (LIMNQTSQKKDGPSGNHLSR), and 128–202 (GGPS…DVPQ). A compositionally biased stretch (polar residues) spans 34-44 (LRPQSPQLRQS). A coiled-coil region spans residues 47 to 93 (QKRNLDLEKSLQFLQQQHSEMLAKLHEEIEHLKRENKDLRYKLIMNQ). Basic residues predominate over residues 141–151 (RTHRPGGKHGR). Residues 165 to 182 (DSLSTSSFQSVKSISNSG) are compositionally biased toward polar residues.

This Homo sapiens (Human) protein is Coiled-coil domain-containing protein 74B (CCDC74B).